Reading from the N-terminus, the 462-residue chain is 3-isopropylmalate dehydratase large subunit (462 aa).

Residues Cys-337, Cys-397, and Cys-400 each contribute to the [4Fe-4S] cluster site.

It belongs to the aconitase/IPM isomerase family. LeuC type 1 subfamily. As to quaternary structure, heterodimer of LeuC and LeuD. The cofactor is [4Fe-4S] cluster.

It carries out the reaction (2R,3S)-3-isopropylmalate = (2S)-2-isopropylmalate. It participates in amino-acid biosynthesis; L-leucine biosynthesis; L-leucine from 3-methyl-2-oxobutanoate: step 2/4. Its function is as follows. Catalyzes the isomerization between 2-isopropylmalate and 3-isopropylmalate, via the formation of 2-isopropylmaleate. This is 3-isopropylmalate dehydratase large subunit from Listeria monocytogenes serotype 4a (strain HCC23).